The following is an 83-amino-acid chain: ATP synthase subunit 9, mitochondrial (83 aa).

Helical transmembrane passes span 8–28 (IGAG…GNVL) and 45–72 (SFGY…LISS).

Belongs to the ATPase C chain family. As to quaternary structure, F-type ATPases have 2 components, CF(1) - the catalytic core - and CF(0) - the membrane proton channel. CF(1) has five subunits: alpha(3), beta(3), gamma(1), delta(1), epsilon(1). CF(0) has three main subunits: a, b and c.

Its subcellular location is the mitochondrion membrane. In terms of biological role, this protein is one of the chains of the nonenzymatic membrane component (F0) of mitochondrial ATPase. In Helianthus annuus (Common sunflower), this protein is ATP synthase subunit 9, mitochondrial (ATP9).